We begin with the raw amino-acid sequence, 620 residues long: Glutathione-regulated potassium-efflux system protein KefC (620 aa).

Transmembrane regions (helical) follow at residues 4-24, 26-46, 54-74, 90-110, 114-134, 149-169, 178-198, 218-238, 270-290, 294-314, 327-347, and 359-379; these read HTLI…PIAV, LGLG…PWGL, SILH…GLEL, GALQ…LLGL, VAEL…MQAM, FAVL…IPLL, MGAF…VVLL, VFSA…EEVG, GLLL…GTLL, LRIV…LWLI, WFAV…GAAQ, and SLTL…VILN. In terms of domain architecture, RCK N-terminal spans 399–518; sequence QPRVIIAGFG…AGVEKPERET (120 aa). Residues 597 to 620 are disordered; the sequence is GWQGTEEGKHTGNMADEPETKPSS.

The protein belongs to the monovalent cation:proton antiporter 2 (CPA2) transporter (TC 2.A.37) family. KefC subfamily. Homodimer. Interacts with the regulatory subunit KefF.

It localises to the cell inner membrane. In terms of biological role, pore-forming subunit of a potassium efflux system that confers protection against electrophiles. Catalyzes K(+)/H(+) antiport. The polypeptide is Glutathione-regulated potassium-efflux system protein KefC (Escherichia coli O6:K15:H31 (strain 536 / UPEC)).